A 134-amino-acid polypeptide reads, in one-letter code: MARVKRGVTSHAKHKKTLKAAKGFYGRRKNTIRAAKAAVDRSKQFAYRDRKVNKRNFRALWIQRINAAVREFGLTYGRFIDGLNKAGIEVDRKVLSDMAIHEPAAFGALVEASKKALAYLKDAGTANEFESAVR.

Belongs to the bacterial ribosomal protein bL20 family.

Its function is as follows. Binds directly to 23S ribosomal RNA and is necessary for the in vitro assembly process of the 50S ribosomal subunit. It is not involved in the protein synthesizing functions of that subunit. The chain is Large ribosomal subunit protein bL20 from Sinorhizobium medicae (strain WSM419) (Ensifer medicae).